The primary structure comprises 296 residues: Nicotinate dehydrogenase FAD-subunit (296 aa).

An FAD-binding PCMH-type domain is found at 1–179 (MKDFEFFAPK…TEVIIDRPDA (179 aa)). FAD-binding positions include 29-36 (IIAGGTDL), Gly101, 110-114 (TIGGN), Asp123, Arg160, Met169, and Lys187.

In terms of assembly, heterooctamer of NDHM, NDHL, NDHS and NDHF. Dimer of heterotetramers. FAD is required as a cofactor.

The catalysed reaction is nicotinate + NADP(+) + H2O = 6-hydroxynicotinate + NADPH + H(+). It functions in the pathway cofactor degradation; nicotinate degradation; 6-hydroxynicotinate from nicotinate: step 1/1. Reversibly inactivated by selenide and sulfide. Not inhibited by cyanide. In terms of biological role, catalyzes the hydroxylation of nicotinate to 6-hydroxynicotinate. Also active against 2-pyrazinecarboxylic acid, but inactive against other nicotinate analogs. In Eubacterium barkeri (Clostridium barkeri), this protein is Nicotinate dehydrogenase FAD-subunit (ndhF).